A 188-amino-acid chain; its full sequence is Ribosome maturation factor RimM (188 aa).

Positions Glu103–Thr177 constitute a PRC barrel domain.

It belongs to the RimM family. In terms of assembly, binds ribosomal protein uS19.

Its subcellular location is the cytoplasm. An accessory protein needed during the final step in the assembly of 30S ribosomal subunit, possibly for assembly of the head region. Essential for efficient processing of 16S rRNA. May be needed both before and after RbfA during the maturation of 16S rRNA. It has affinity for free ribosomal 30S subunits but not for 70S ribosomes. This is Ribosome maturation factor RimM from Parvibaculum lavamentivorans (strain DS-1 / DSM 13023 / NCIMB 13966).